Reading from the N-terminus, the 224-residue chain is Imidazoleglycerol-phosphate dehydratase (224 aa).

It belongs to the imidazoleglycerol-phosphate dehydratase family.

The enzyme catalyses D-erythro-1-(imidazol-4-yl)glycerol 3-phosphate = 3-(imidazol-4-yl)-2-oxopropyl phosphate + H2O. The protein operates within amino-acid biosynthesis; L-histidine biosynthesis; L-histidine from 5-phospho-alpha-D-ribose 1-diphosphate: step 6/9. This chain is Imidazoleglycerol-phosphate dehydratase (HIS3), found in Cyberlindnera jadinii (Torula yeast).